Reading from the N-terminus, the 188-residue chain is MSVLPTPLANQLLIALPALSDPTFSRSVALICQHDENGAMGVLVNRPSEYTLGEVLSQMGIDTDDEPLREQVVLSGGPVHPERGFVIHDDAREWDSSLEVGQGVFLTTSRDILEAMAAGNGPRNALVALGCAGWGAGQLEFELGENSWLTAPSDANVLFATALEDRWQTAAGRIGVDLFRLTDYSGHA.

It belongs to the UPF0301 (AlgH) family.

The protein is UPF0301 protein XCV3063 of Xanthomonas euvesicatoria pv. vesicatoria (strain 85-10) (Xanthomonas campestris pv. vesicatoria).